The primary structure comprises 334 residues: Holliday junction branch migration complex subunit RuvB (334 aa).

The interval 1 to 182 (MDERLVSSEL…FGVLSRLEYY (182 aa)) is large ATPase domain (RuvB-L). Residues Leu21, Arg22, Gly63, Lys66, Thr67, Thr68, 129-131 (EDF), Arg172, Tyr182, and Arg219 contribute to the ATP site. Residue Thr67 coordinates Mg(2+). The interval 183–253 (TRDELSEIVI…VAVDALERLQ (71 aa)) is small ATPAse domain (RuvB-S). The head domain (RuvB-H) stretch occupies residues 256-334 (KLGLDHIDRK…HFKMEVPNHD (79 aa)). 2 residues coordinate DNA: Arg311 and Arg316.

It belongs to the RuvB family. Homohexamer. Forms an RuvA(8)-RuvB(12)-Holliday junction (HJ) complex. HJ DNA is sandwiched between 2 RuvA tetramers; dsDNA enters through RuvA and exits via RuvB. An RuvB hexamer assembles on each DNA strand where it exits the tetramer. Each RuvB hexamer is contacted by two RuvA subunits (via domain III) on 2 adjacent RuvB subunits; this complex drives branch migration. In the full resolvosome a probable DNA-RuvA(4)-RuvB(12)-RuvC(2) complex forms which resolves the HJ.

The protein resides in the cytoplasm. It catalyses the reaction ATP + H2O = ADP + phosphate + H(+). The RuvA-RuvB-RuvC complex processes Holliday junction (HJ) DNA during genetic recombination and DNA repair, while the RuvA-RuvB complex plays an important role in the rescue of blocked DNA replication forks via replication fork reversal (RFR). RuvA specifically binds to HJ cruciform DNA, conferring on it an open structure. The RuvB hexamer acts as an ATP-dependent pump, pulling dsDNA into and through the RuvAB complex. RuvB forms 2 homohexamers on either side of HJ DNA bound by 1 or 2 RuvA tetramers; 4 subunits per hexamer contact DNA at a time. Coordinated motions by a converter formed by DNA-disengaged RuvB subunits stimulates ATP hydrolysis and nucleotide exchange. Immobilization of the converter enables RuvB to convert the ATP-contained energy into a lever motion, pulling 2 nucleotides of DNA out of the RuvA tetramer per ATP hydrolyzed, thus driving DNA branch migration. The RuvB motors rotate together with the DNA substrate, which together with the progressing nucleotide cycle form the mechanistic basis for DNA recombination by continuous HJ branch migration. Branch migration allows RuvC to scan DNA until it finds its consensus sequence, where it cleaves and resolves cruciform DNA. The protein is Holliday junction branch migration complex subunit RuvB of Bacillus licheniformis (strain ATCC 14580 / DSM 13 / JCM 2505 / CCUG 7422 / NBRC 12200 / NCIMB 9375 / NCTC 10341 / NRRL NRS-1264 / Gibson 46).